We begin with the raw amino-acid sequence, 89 residues long: Exodeoxyribonuclease 7 small subunit (89 aa).

The protein belongs to the XseB family. As to quaternary structure, heterooligomer composed of large and small subunits.

It is found in the cytoplasm. It carries out the reaction Exonucleolytic cleavage in either 5'- to 3'- or 3'- to 5'-direction to yield nucleoside 5'-phosphates.. In terms of biological role, bidirectionally degrades single-stranded DNA into large acid-insoluble oligonucleotides, which are then degraded further into small acid-soluble oligonucleotides. In Chlorobium phaeobacteroides (strain DSM 266 / SMG 266 / 2430), this protein is Exodeoxyribonuclease 7 small subunit.